We begin with the raw amino-acid sequence, 506 residues long: Galactose/methyl galactoside import ATP-binding protein MglA (506 aa).

ABC transporter domains lie at L14 to E249 and V264 to L506. Residue G46–S53 coordinates ATP.

This sequence belongs to the ABC transporter superfamily. Galactose/methyl galactoside importer (TC 3.A.1.2.3) family. In terms of assembly, the complex is composed of one ATP-binding protein (MglA), two transmembrane proteins (MglC) and a solute-binding protein (MglB).

The protein resides in the cell inner membrane. It carries out the reaction D-galactose(out) + ATP + H2O = D-galactose(in) + ADP + phosphate + H(+). The catalysed reaction is methyl beta-D-galactoside(out) + ATP + H2O = methyl beta-D-galactoside(in) + ADP + phosphate + H(+). Part of the ABC transporter complex MglABC involved in galactose/methyl galactoside import. Responsible for energy coupling to the transport system. In Mannheimia succiniciproducens (strain KCTC 0769BP / MBEL55E), this protein is Galactose/methyl galactoside import ATP-binding protein MglA.